The sequence spans 454 residues: Zinc finger CCCH domain-containing protein 66 (454 aa).

Residues 1 to 23 (MAAGAGAGGGGGEGDSNGGGTSP) are compositionally biased toward gly residues. Residues 1–30 (MAAGAGAGGGGGEGDSNGGGTSPGGVSAAA) form a disordered region. 5 consecutive C3H1-type zinc fingers follow at residues 66-94 (RIGE…HPPN), 111-139 (RVGQ…HPRE), 157-185 (RPNE…HPQP), 318-346 (RPDQ…HPKE), and 364-392 (RPGE…HPMG). The tract at residues 405 to 454 (DVSSMHYQLSPSPGHPGILLDGGSGRSHRVPQSDSQQIPSGDGNAEREAS) is disordered. Over residues 434 to 443 (VPQSDSQQIP) the composition is skewed to polar residues.

In Oryza sativa subsp. japonica (Rice), this protein is Zinc finger CCCH domain-containing protein 66.